Reading from the N-terminus, the 181-residue chain is UPF0232 protein MAP_0004 (181 aa).

Residues 1–11 (MSDDQSPSPSG) show a composition bias toward polar residues. Disordered regions lie at residues 1–70 (MSDD…PQPL) and 161–181 (APSW…DTYG). A compositionally biased stretch (basic and acidic residues) spans 18 to 39 (LVRRTLEEARAAARAQGKDAGR). Residues 40 to 50 (GRAAAPTPRRV) are compositionally biased toward low complexity.

Belongs to the UPF0232 family.

The protein is UPF0232 protein MAP_0004 of Mycolicibacterium paratuberculosis (strain ATCC BAA-968 / K-10) (Mycobacterium paratuberculosis).